The primary structure comprises 618 residues: MARPIADLIHFNSTTVTASGDVYYGPGGGTGIGPIARPIEHGLDSSTENGWQEFESYADVGVDPRRYVPLQVKEKRREIELQFRDAEKKLEASVQAELDKADAALGPAKNLAPLDVINRSLTIVGNALQQKNQKLLLNQKKITSLGAKNFLTRTAEEIGEQAVREGNINGPEAYMRFLDREMEGLTAAYNVKLFTEAISSLQIRMNTLTAAKASIEAAAANKAREQAAAEAKRKAEEQARQQAAIRAANTYAMPANGSVVATAAGRGLIQVAQGAASLAQAISDAIAVLGRVLASAPSVMAVGFASLTYSSRTAEQWQDQTPDSVRYALGMDAAKLGLPPSVNLNAVAKASGTVDLPMRLTNEARGNTTTLSVVSTDGVSVPKAVPVRMAAYNATTGLYEVTVPSTTAEAPPLILTWTPASPPGNQNPSSTTPVVPKPVPVYEGATLTPVKATPETYPGVITLPEDLIIGFPADSGIKPIYVMFRDPRDVPGAATGKGQPVSGNWLGAASQGEGAPIPSQIADKLRGKTFKNWRDFREQFWIAVANDPELSKQFNPGSLAVMRDGGAPYVRESEQAGGRIKIEIHHKVRVADGGGVYNMGNLVAVTPKRHIEIHKGGK.

Belongs to the colicin/pyosin nuclease family. Purified pyocin S1 makes up a complex of the two (large and small) proteins. The large protein, but not the pyocin complex, shows in vitro DNase activity.

Functionally, causes breakdown of chromosomal DNA as well as complete inhibition of lipid synthesis in sensitive cells. This chain is Pyocin-S1 (pys1), found in Pseudomonas aeruginosa.